A 374-amino-acid chain; its full sequence is MEILRIEPTPSPNTMKVVLSYTREDKLSNTYKKVEETQPRFINQLLSIDGITSIFHVMNFLAVDKAPKADWEVILPDIKAAFSDANKVLESVNEPQIDNHFGEIKAELLTFKGIPYQIKLTSADQELREQLPQTYVDHMTQAQTAHDNIVFMRKWLDLGNRYGNIQEVMDGVLEEVLTTYPESQLPVLVKHALEENHATNNYHFYRHVSLDEYHATDNWKTRLRMLNHFPKPTFEDIPLLDLALSDEKVPVRRQAIVLLGMIESKEILPYLYKGLRDKSPVVRRTAGDCISDLGYPEALPEMVLLLDDPQKIVRWRAAMFIFDEGNAEQLPALKAHINDNAFEVKLQIEMAISRIENGDEALGSVWKQMANRTI.

It belongs to the CvfC family.

Its function is as follows. Required for hemolysin production. The polypeptide is Conserved virulence factor C (cvfC) (Staphylococcus aureus (strain USA300)).